Reading from the N-terminus, the 245-residue chain is PF03932 family protein CutC (245 aa).

Belongs to the CutC family.

It is found in the cytoplasm. This is PF03932 family protein CutC from Rhizobium meliloti (strain 1021) (Ensifer meliloti).